We begin with the raw amino-acid sequence, 464 residues long: Chromosomal replication initiator protein DnaA (464 aa).

Residues 1–90 (MNNDNTEVLE…KYWQDEDQSI (90 aa)) form a domain I, interacts with DnaA modulators region. The interval 90–126 (ICSVDICVVSNQDPNLLVDIKDRVDRGIKGNCDNVSS) is domain II. Residues 127–345 (PLDPRFTFDN…GALNKVVAHS (219 aa)) are domain III, AAA+ region. ATP is bound by residues Gly173, Gly175, Lys176, and Thr177. A domain IV, binds dsDNA region spans residues 346 to 464 (SLVGCSITLD…DINLLNRMLR (119 aa)).

This sequence belongs to the DnaA family. As to quaternary structure, oligomerizes as a right-handed, spiral filament on DNA at oriC.

The protein localises to the cytoplasm. Plays an essential role in the initiation and regulation of chromosomal replication. ATP-DnaA binds to the origin of replication (oriC) to initiate formation of the DNA replication initiation complex once per cell cycle. Binds the DnaA box (a 9 base pair repeat at the origin) and separates the double-stranded (ds)DNA. Forms a right-handed helical filament on oriC DNA; dsDNA binds to the exterior of the filament while single-stranded (ss)DNA is stabiized in the filament's interior. The ATP-DnaA-oriC complex binds and stabilizes one strand of the AT-rich DNA unwinding element (DUE), permitting loading of DNA polymerase. After initiation quickly degrades to an ADP-DnaA complex that is not apt for DNA replication. Binds acidic phospholipids. This Ehrlichia ruminantium (strain Gardel) protein is Chromosomal replication initiator protein DnaA.